A 173-amino-acid polypeptide reads, in one-letter code: Peptide deformylase (173 aa).

2 residues coordinate Fe cation: cysteine 94 and histidine 136. Residue glutamate 137 is part of the active site. Residue histidine 140 coordinates Fe cation.

The protein belongs to the polypeptide deformylase family. Fe(2+) is required as a cofactor.

It catalyses the reaction N-terminal N-formyl-L-methionyl-[peptide] + H2O = N-terminal L-methionyl-[peptide] + formate. Functionally, removes the formyl group from the N-terminal Met of newly synthesized proteins. Requires at least a dipeptide for an efficient rate of reaction. N-terminal L-methionine is a prerequisite for activity but the enzyme has broad specificity at other positions. In Desulfosudis oleivorans (strain DSM 6200 / JCM 39069 / Hxd3) (Desulfococcus oleovorans), this protein is Peptide deformylase.